Here is a 157-residue protein sequence, read N- to C-terminus: Small ribosomal subunit protein bS6 (157 aa).

Over residues 96–151 (HEEGPSAMMRKADRDRDRDERGGGGFRGDREGGFRGDREGGGFRGDRGPRRPRDDA) the composition is skewed to basic and acidic residues. The tract at residues 96-157 (HEEGPSAMMR…RDDAPAATEE (62 aa)) is disordered.

It belongs to the bacterial ribosomal protein bS6 family.

Binds together with bS18 to 16S ribosomal RNA. The protein is Small ribosomal subunit protein bS6 of Rhodopseudomonas palustris (strain BisA53).